The chain runs to 173 residues: Large ribosomal subunit protein uL10 (173 aa).

The protein belongs to the universal ribosomal protein uL10 family. As to quaternary structure, part of the ribosomal stalk of the 50S ribosomal subunit. The N-terminus interacts with L11 and the large rRNA to form the base of the stalk. The C-terminus forms an elongated spine to which L12 dimers bind in a sequential fashion forming a multimeric L10(L12)X complex.

Forms part of the ribosomal stalk, playing a central role in the interaction of the ribosome with GTP-bound translation factors. The sequence is that of Large ribosomal subunit protein uL10 from Bifidobacterium longum (strain DJO10A).